A 1551-amino-acid chain; its full sequence is Serine/threonine-protein kinase MRCK gamma (1551 aa).

The region spanning 71–337 (FEILKVIGRG…LDDFRKHPFF (267 aa)) is the Protein kinase domain. ATP contacts are provided by residues 77 to 85 (IGRGAFGEV) and Lys-100. Asp-195 (proton acceptor) is an active-site residue. 2 positions are modified to phosphoserine; by autocatalysis: Ser-216 and Ser-228. Thr-234 carries the phosphothreonine; by autocatalysis modification. An AGC-kinase C-terminal domain is found at 338–408 (EGVDWERLAT…TSGSPFDVQS (71 aa)). Coiled coils occupy residues 442-675 (QPQE…TESN) and 729-801 (KARR…QARG). Residues 578-605 (QESSQAKTVHAAPETNGIGSPEGQSQEA) are disordered. The segment at 820–886 (TEKDSAKDPG…SHTLRPRSFP (67 aa)) is disordered. Over residues 839–849 (AEAELRPEGRR) the composition is skewed to basic and acidic residues. The segment at 877–926 (SHTLRPRSFPSPTKCLRCTSLMLGLGRQGLGCDTCGYFCHSACASQAPPC) adopts a Phorbol-ester/DAG-type zinc-finger fold. A PH domain is found at 946–1065 (GTAYEGFLSV…WLQVLGELQR (120 aa)). The region spanning 1091 to 1365 (LPHALCAAVI…RPLNPEGSLF (275 aa)) is the CNH domain. The region spanning 1436 to 1449 (ISPPTNFNHLVHVG) is the CRIB domain. Residues 1441–1551 (NFNHLVHVGP…PPDPESESSP (111 aa)) form a disordered region. Basic and acidic residues predominate over residues 1455 to 1468 (PNTRDGTRAQEQKS). At Ser-1481 the chain carries Phosphoserine. Polar residues predominate over residues 1511-1527 (TSLSSESVSCPQGSLSP).

This sequence belongs to the protein kinase superfamily. AGC Ser/Thr protein kinase family. DMPK subfamily. In terms of assembly, homodimer and homotetramer via the coiled coil regions. Interacts tightly with GTP-bound but not GDP-bound CDC42. Requires Mg(2+) as cofactor.

It is found in the cytoplasm. It catalyses the reaction L-seryl-[protein] + ATP = O-phospho-L-seryl-[protein] + ADP + H(+). It carries out the reaction L-threonyl-[protein] + ATP = O-phospho-L-threonyl-[protein] + ADP + H(+). Maintained in an inactive, closed conformation by an interaction between the kinase domain and the negative autoregulatory C-terminal coiled-coil region. Agonist binding to the phorbol ester binding site disrupts this, releasing the kinase domain to allow N-terminus-mediated dimerization and kinase activation by transautophosphorylation. Functionally, may act as a downstream effector of CDC42 in cytoskeletal reorganization. Contributes to the actomyosin contractility required for cell invasion, through the regulation of MYPT1 and thus MLC2 phosphorylation. The sequence is that of Serine/threonine-protein kinase MRCK gamma from Mus musculus (Mouse).